The following is a 730-amino-acid chain: Rap1 GTPase-activating protein 2 (730 aa).

The residue at position 7 (S7) is a Phosphoserine; by PKG/PRKG1; in vitro. The tract at residues 32–53 (ANSSDATLPDRPLSPPLTAPPT) is disordered. S45 is subject to Phosphoserine. Residue T49 is modified to Phosphothreonine. Residues 248 to 464 (IVSYDEHEVN…RTRAALLDNL (217 aa)) form the Rap-GAP domain. S507 is modified (phosphoserine). The tract at residues 509–533 (ETMVGGQKKSHSGGIPGSLSGGISH) is disordered. Residues S544, S558, S564, S612, and S613 each carry the phosphoserine modification. Residues 552–730 (VKNQSRSPIK…LSHASSGAGH (179 aa)) are disordered. Residues 585–613 (DSTSSTPKTPDGGHSSQEIKSETSSNPSS) are compositionally biased toward polar residues. Residues 618-631 (PNKEKPFMKLKENG) show a composition bias toward basic and acidic residues. Positions 635 to 647 (SRSSSSTSSVSST) are enriched in low complexity. The span at 661–670 (GSQPSTTSPF) shows a compositional bias: polar residues. Positions 678-687 (SPSPSSESPS) are enriched in low complexity. A compositionally biased stretch (polar residues) spans 699–712 (RSPTDAKSRNSPRS).

In terms of processing, in vitro phosphorylated by cGMP-dependent protein kinase 1 (cGKI) at Ser-7; the phosphorylation probably does not regulate GAP activity. In terms of tissue distribution, isoform 1 and isoform 2 are expressed in platelets with isoform 2 being the predominant form. Expressed in lymphocytes, heart, testis and pancreas.

Its subcellular location is the cytoplasm. It localises to the perinuclear region. Functionally, GTPase activator for the nuclear Ras-related regulatory protein RAP-1A (KREV-1), converting it to the putatively inactive GDP-bound state. In Homo sapiens (Human), this protein is Rap1 GTPase-activating protein 2 (RAP1GAP2).